The primary structure comprises 79 residues: Sec-independent protein translocase protein TatA (79 aa).

The chain crosses the membrane as a helical span at residues 1 to 21; the sequence is MGGWSSPSHWLIILLIVVLLF. Residues 52–61 show a composition bias toward basic and acidic residues; sequence KNTQKIEENK. Residues 52 to 79 form a disordered region; that stretch reads KNTQKIEENKNTTNNTSADASIDKTKKA.

The protein belongs to the TatA/E family. The Tat system comprises two distinct complexes: a TatABC complex, containing multiple copies of TatA, TatB and TatC subunits, and a separate TatA complex, containing only TatA subunits. Substrates initially bind to the TatABC complex, which probably triggers association of the separate TatA complex to form the active translocon.

Its subcellular location is the cell inner membrane. In terms of biological role, part of the twin-arginine translocation (Tat) system that transports large folded proteins containing a characteristic twin-arginine motif in their signal peptide across membranes. TatA could form the protein-conducting channel of the Tat system. The protein is Sec-independent protein translocase protein TatA of Campylobacter jejuni subsp. jejuni serotype O:6 (strain 81116 / NCTC 11828).